Here is a 123-residue protein sequence, read N- to C-terminus: Signal recognition particle 14 kDa protein (123 aa).

A disordered region spans residues 99 to 123; sequence KKKPTPTTTPSSSTTAKTAAKKTKV. Residues 103-116 show a composition bias toward low complexity; it reads TPTTTPSSSTTAKT.

It belongs to the SRP14 family. As to quaternary structure, heterodimer with srp9; binds RNA as heterodimer. Component of a signal recognition particle (SRP) complex that consists of a 7SL RNA molecule and six protein subunits: srp72, srp68, srp54, srp19, srp14 and srp9.

The protein resides in the cytoplasm. Functionally, component of the signal recognition particle (SRP) complex, a ribonucleoprotein complex that mediates the cotranslational targeting of secretory and membrane proteins to the endoplasmic reticulum (ER). Srp9 together with srp14 and the Alu portion of the SRP RNA, constitutes the elongation arrest domain of SRP. The complex of srp9 and srp14 is required for SRP RNA binding. The sequence is that of Signal recognition particle 14 kDa protein (srp14-1) from Dictyostelium discoideum (Social amoeba).